The primary structure comprises 304 residues: Tetrahydromethanopterin S-methyltransferase subunit E (304 aa).

The next 6 helical transmembrane spans lie at 3 to 23, 86 to 106, 131 to 151, 152 to 172, 233 to 253, and 263 to 283; these read PLIGMGVLALIGVAATIAGAS, PLFALVLGALIAACVHGTFAV, HTPVIMGYSFITTFCILVVSY, LMTVVLGHPFPLTMLAFIWGI, PVTGMAFGMTVFLGSWVTTVF, and WISVVAGVIIVLILIFWNWKI.

This sequence belongs to the MtrE family. The complex is composed of 8 subunits; MtrA, MtrB, MtrC, MtrD, MtrE, MtrF, MtrG and MtrH.

It localises to the cell membrane. The catalysed reaction is 5-methyl-5,6,7,8-tetrahydromethanopterin + coenzyme M + 2 Na(+)(in) = 5,6,7,8-tetrahydromethanopterin + methyl-coenzyme M + 2 Na(+)(out). Its pathway is one-carbon metabolism; methanogenesis from CO(2); methyl-coenzyme M from 5,10-methylene-5,6,7,8-tetrahydromethanopterin: step 2/2. Part of a complex that catalyzes the formation of methyl-coenzyme M and tetrahydromethanopterin from coenzyme M and methyl-tetrahydromethanopterin. This is an energy-conserving, sodium-ion translocating step. This Methanosarcina acetivorans (strain ATCC 35395 / DSM 2834 / JCM 12185 / C2A) protein is Tetrahydromethanopterin S-methyltransferase subunit E.